A 164-amino-acid polypeptide reads, in one-letter code: MNITIGELIGNFILVAGSFLLLIVLIKKFAWGNITSIFEERAKKISDDIDSAESARKNAEVLEQKREEALAGSREEAATIVETAKETAEKNKASILADTTEEVSRLKQKANQEIAQSKAEALRSIKGDVADLSIDLASKIIGQTLDKEAQSQLIDSYIDKLGDA.

A helical membrane pass occupies residues 5 to 25 (IGELIGNFILVAGSFLLLIVL).

This sequence belongs to the ATPase B chain family. F-type ATPases have 2 components, F(1) - the catalytic core - and F(0) - the membrane proton channel. F(1) has five subunits: alpha(3), beta(3), gamma(1), delta(1), epsilon(1). F(0) has three main subunits: a(1), b(2) and c(10-14). The alpha and beta chains form an alternating ring which encloses part of the gamma chain. F(1) is attached to F(0) by a central stalk formed by the gamma and epsilon chains, while a peripheral stalk is formed by the delta and b chains.

The protein localises to the cell membrane. In terms of biological role, f(1)F(0) ATP synthase produces ATP from ADP in the presence of a proton or sodium gradient. F-type ATPases consist of two structural domains, F(1) containing the extramembraneous catalytic core and F(0) containing the membrane proton channel, linked together by a central stalk and a peripheral stalk. During catalysis, ATP synthesis in the catalytic domain of F(1) is coupled via a rotary mechanism of the central stalk subunits to proton translocation. Its function is as follows. Component of the F(0) channel, it forms part of the peripheral stalk, linking F(1) to F(0). This chain is ATP synthase subunit b, found in Streptococcus gordonii (strain Challis / ATCC 35105 / BCRC 15272 / CH1 / DL1 / V288).